The chain runs to 177 residues: Large ribosomal subunit protein uL6 (177 aa).

Belongs to the universal ribosomal protein uL6 family. As to quaternary structure, part of the 50S ribosomal subunit.

In terms of biological role, this protein binds to the 23S rRNA, and is important in its secondary structure. It is located near the subunit interface in the base of the L7/L12 stalk, and near the tRNA binding site of the peptidyltransferase center. This is Large ribosomal subunit protein uL6 from Brucella melitensis biotype 1 (strain ATCC 23456 / CCUG 17765 / NCTC 10094 / 16M).